The primary structure comprises 224 residues: Cytidylate kinase (224 aa).

An ATP-binding site is contributed by 11–19 (GPAGAGKST).

The protein belongs to the cytidylate kinase family. Type 1 subfamily.

The protein localises to the cytoplasm. It catalyses the reaction CMP + ATP = CDP + ADP. The enzyme catalyses dCMP + ATP = dCDP + ADP. The sequence is that of Cytidylate kinase from Exiguobacterium sp. (strain ATCC BAA-1283 / AT1b).